Reading from the N-terminus, the 240-residue chain is Uridylate kinase (240 aa).

Lys-13–Gly-16 lines the ATP pocket. Residues Gly-21–Gly-26 are involved in allosteric activation by GTP. A UMP-binding site is contributed by Gly-55. Residues Gly-56 and Arg-60 each contribute to the ATP site. UMP contacts are provided by residues Asp-75 and Thr-136–Thr-143. The ATP site is built by Thr-163, Gln-164, Tyr-169, and Asp-172.

Belongs to the UMP kinase family. In terms of assembly, homohexamer.

The protein resides in the cytoplasm. It carries out the reaction UMP + ATP = UDP + ADP. Its pathway is pyrimidine metabolism; CTP biosynthesis via de novo pathway; UDP from UMP (UMPK route): step 1/1. With respect to regulation, allosterically activated by GTP. Inhibited by UTP. Its function is as follows. Catalyzes the reversible phosphorylation of UMP to UDP. This is Uridylate kinase from Rhizobium meliloti (strain 1021) (Ensifer meliloti).